Consider the following 333-residue polypeptide: MDLIESIWECAKQDKKRIILAEGEEKRNLIAADKIIKEGLAELVLVGDENKIKEKASELNLDISKAEIMDPETSLKTETYARDFYELRKHKGMTIEKSEKMVRDPLYFATMALKDGYVDGMVSGAVHTTGDLLRPGLQIIKTAPGVKIVSGFFVMIIPDCDYGEEGLLLFADCAVNPNPTSDELADIAITTAETARKLCNVEPKVAMLSFSTMGSAKGEMVDKVKNAVEITKKFRPDLAIDGELQLDAAIDSEVAALKAPSSNVAGNANVLVFPDLQTGNIGYKLVQRFAKAKAIGPICQGFAKPINDLSRGCSSEDIVNVVAITVVQAQRGI.

This sequence belongs to the phosphate acetyltransferase and butyryltransferase family.

The protein localises to the cytoplasm. The catalysed reaction is acetyl-CoA + phosphate = acetyl phosphate + CoA. It functions in the pathway metabolic intermediate biosynthesis; acetyl-CoA biosynthesis; acetyl-CoA from acetate: step 2/2. The chain is Phosphate acetyltransferase (pta) from Clostridium acetobutylicum (strain ATCC 824 / DSM 792 / JCM 1419 / IAM 19013 / LMG 5710 / NBRC 13948 / NRRL B-527 / VKM B-1787 / 2291 / W).